The primary structure comprises 539 residues: MFCFQCQEAAKNEGCTIKGVCGKDDVVANLQDLLIYTIKGLCYVCDKGNYLDDEVMDYIPKALFVTITNVNFDDKDVINWIKKGVALREKIIEKNNLNKEELPYCATWAYETDEDLINLANTKEVSVLAEDNEDIRSLKELITYGIKGIGAYLSHAMHLGYNNEDIHKFIIKAFTKIVDSKDADELFNLAMETGKYAVETLALLDKANTETYGHPEITEVNLGVRDRPGILISGHDLKDLEQLLEQSKDAGVDIYTHCEMLPAHYYPFFKKYEHFVGNYGGSWPFQREEFEKFNGPIVMTTNCLVPPKDSYKDRVYVTNEVGYPGLKRIPVKEDGTKDFSEVIEHAKKCKPPTPLENGKIVGGFAHNQVLALADKVIEAVKSGKIRKFVVMAGCDGRHKTREYYTEFAKKLPKDTVILTCGCAKYRFIKLDLGDIDGIPRVLDAGQCNDSYSLVKIALALKDAFGLNDVNELPIAYNISWYEQKAVTVLLALLYLGVKNIVLGPTLPAFLSPNVTKVLVEKFGISTISTVDEDIKRLVG.

Positions 3, 6, 15, and 21 each coordinate [4Fe-4S] cluster. 8 residues coordinate hybrid [4Fe-2O-2S] cluster: histidine 235, glutamate 259, cysteine 303, cysteine 394, cysteine 422, cysteine 447, glutamate 482, and lysine 484. Residue cysteine 394 is modified to Cysteine persulfide.

Belongs to the HCP family. Requires [4Fe-4S] cluster as cofactor. Hybrid [4Fe-2O-2S] cluster is required as a cofactor.

It is found in the cytoplasm. The catalysed reaction is A + NH4(+) + H2O = hydroxylamine + AH2 + H(+). Its function is as follows. Catalyzes the reduction of hydroxylamine to form NH(3) and H(2)O. The protein is Hydroxylamine reductase of Methanocaldococcus jannaschii (strain ATCC 43067 / DSM 2661 / JAL-1 / JCM 10045 / NBRC 100440) (Methanococcus jannaschii).